Consider the following 368-residue polypeptide: S-adenosylmethionine decarboxylase proenzyme (368 aa).

Active-site residues include E26 and E29. S83 functions as the Schiff-base intermediate with substrate; via pyruvic acid in the catalytic mechanism. Pyruvic acid (Ser); by autocatalysis is present on S83. C97 functions as the Proton donor; for catalytic activity in the catalytic mechanism. Residues S246 and H261 each act as proton acceptor; for processing activity in the active site.

The protein belongs to the eukaryotic AdoMetDC family. Heterotetramer of two alpha and two beta chains. Requires pyruvate as cofactor. Post-translationally, is synthesized initially as an inactive proenzyme. Formation of the active enzyme involves a self-maturation process in which the active site pyruvoyl group is generated from an internal serine residue via an autocatalytic post-translational modification. Two non-identical subunits are generated from the proenzyme in this reaction, and the pyruvate is formed at the N-terminus of the alpha chain, which is derived from the carboxyl end of the proenzyme. The post-translation cleavage follows an unusual pathway, termed non-hydrolytic serinolysis, in which the side chain hydroxyl group of the serine supplies its oxygen atom to form the C-terminus of the beta chain, while the remainder of the serine residue undergoes an oxidative deamination to produce ammonia and the pyruvoyl group blocking the N-terminus of the alpha chain.

It carries out the reaction S-adenosyl-L-methionine + H(+) = S-adenosyl 3-(methylsulfanyl)propylamine + CO2. It participates in amine and polyamine biosynthesis; S-adenosylmethioninamine biosynthesis; S-adenosylmethioninamine from S-adenosyl-L-methionine: step 1/1. Its function is as follows. Essential for biosynthesis of the polyamines spermidine and spermine. Polyamines are essential for cell proliferation and are implicated in cellular processes, ranging from DNA replication to apoptosis. The chain is S-adenosylmethionine decarboxylase proenzyme from Caenorhabditis elegans.